The sequence spans 312 residues: Ribosomal RNA small subunit methyltransferase H (312 aa).

Residues 34–36 (AGH), aspartate 54, phenylalanine 81, aspartate 102, and glutamine 109 contribute to the S-adenosyl-L-methionine site.

It belongs to the methyltransferase superfamily. RsmH family.

Its subcellular location is the cytoplasm. It carries out the reaction cytidine(1402) in 16S rRNA + S-adenosyl-L-methionine = N(4)-methylcytidine(1402) in 16S rRNA + S-adenosyl-L-homocysteine + H(+). In terms of biological role, specifically methylates the N4 position of cytidine in position 1402 (C1402) of 16S rRNA. This Geotalea daltonii (strain DSM 22248 / JCM 15807 / FRC-32) (Geobacter daltonii) protein is Ribosomal RNA small subunit methyltransferase H.